Reading from the N-terminus, the 156-residue chain is Snaclec 2 (156 aa).

An N-terminal signal peptide occupies residues 1–21; the sequence is MGRFIFLSSGLLVVFLSLSGA. 3 disulfide bridges follow: C25-C36, C53-C150, and C125-C142. The 120-residue stretch at 32-151 folds into the C-type lectin domain; that stretch reads FDQHCYRAFD…CGDDYPFVCK (120 aa).

It belongs to the snaclec family. In terms of assembly, heterodimer; disulfide-linked. In terms of tissue distribution, expressed by the venom gland.

Its subcellular location is the secreted. Interferes with one step of hemostasis (modulation of platelet aggregation, or coagulation cascade, for example). In Bitis gabonica (Gaboon adder), this protein is Snaclec 2.